A 398-amino-acid polypeptide reads, in one-letter code: MLVLLIVFFNSYYTHCSHHSLYSFHCTPPDPAMKQSPLHRPSRPLLALGIEGSANKLGCGIISHSPSPTGGPTLVMVLSNVRHTYITPPGEGFLPSDTARHHREWVVKVIEEAVRKAGVRMGDLDCIAFTKGPGMGTPLQVGALVARTLSLLHNIPLVGVNHCVGHIEMGRQITSSHNPIVLYVSGGNTQVIAYSQQRYRIFGETLDIAIGNCLDRFARVIGLRNDPSPGYNIEKEAKKGKRLVQLPYGTKGMDVSLAGILHSVEAYTKDKRYRSWDQVNDVEEDIITPYDLCFSLQETTFAMLVEITERAMAHVGAKDVLIVGGVGCNLRLQEMMGIMASERGGRVFATDESFCIDNGIMIAQAGLLAFRMGNTMPLEKTGVTQRYRTDAVHVAWRA.

The a divalent metal cation site is built by His-162, His-166, and Tyr-183. Substrate-binding positions include 183–187 (YVSGG), Asp-215, Gly-230, Glu-234, and Asn-329. Asp-357 lines the a divalent metal cation pocket.

This sequence belongs to the KAE1 / TsaD family. As to quaternary structure, component of the EKC/KEOPS complex composed of at least BUD32, CGI121, GON7, KAE1 and PCC1; the whole complex dimerizes. The cofactor is a divalent metal cation.

Its subcellular location is the cytoplasm. The protein localises to the nucleus. It catalyses the reaction L-threonylcarbamoyladenylate + adenosine(37) in tRNA = N(6)-L-threonylcarbamoyladenosine(37) in tRNA + AMP + H(+). Functionally, component of the EKC/KEOPS complex that is required for the formation of a threonylcarbamoyl group on adenosine at position 37 (t(6)A37) in tRNAs that read codons beginning with adenine. The complex is probably involved in the transfer of the threonylcarbamoyl moiety of threonylcarbamoyl-AMP (TC-AMP) to the N6 group of A37. KAE1 likely plays a direct catalytic role in this reaction, but requires other protein(s) of the complex to fulfill this activity. The EKC/KEOPS complex also promotes both telomere uncapping and telomere elongation. The complex is required for efficient recruitment of transcriptional coactivators. The polypeptide is tRNA N6-adenosine threonylcarbamoyltransferase (Cryptococcus neoformans var. neoformans serotype D (strain B-3501A) (Filobasidiella neoformans)).